The sequence spans 447 residues: Signal recognition particle protein (447 aa).

GTP is bound by residues glycine 108–threonine 115, aspartate 190–arginine 194, and threonine 248–aspartate 251.

This sequence belongs to the GTP-binding SRP family. SRP54 subfamily. As to quaternary structure, part of the signal recognition particle protein translocation system, which is composed of SRP and FtsY. Interacts with RNA.

It localises to the cytoplasm. It carries out the reaction GTP + H2O = GDP + phosphate + H(+). In terms of biological role, involved in targeting and insertion of nascent membrane proteins into the cytoplasmic membrane. Binds to the hydrophobic signal sequence of the ribosome-nascent chain (RNC) as it emerges from the ribosomes. The SRP-RNC complex is then targeted to the cytoplasmic membrane where it interacts with the SRP receptor FtsY. This is Signal recognition particle protein from Mycoplasma mycoides.